The chain runs to 706 residues: Ribosomal RNA large subunit methyltransferase K/L (706 aa).

Residues 43-154 (LMYQSLLWSR…RDMASVALDL (112 aa)) form the THUMP domain.

Belongs to the methyltransferase superfamily. RlmKL family.

The protein resides in the cytoplasm. The enzyme catalyses guanosine(2445) in 23S rRNA + S-adenosyl-L-methionine = N(2)-methylguanosine(2445) in 23S rRNA + S-adenosyl-L-homocysteine + H(+). It catalyses the reaction guanosine(2069) in 23S rRNA + S-adenosyl-L-methionine = N(2)-methylguanosine(2069) in 23S rRNA + S-adenosyl-L-homocysteine + H(+). Functionally, specifically methylates the guanine in position 2445 (m2G2445) and the guanine in position 2069 (m7G2069) of 23S rRNA. This Yersinia pestis (strain Pestoides F) protein is Ribosomal RNA large subunit methyltransferase K/L.